The following is a 569-amino-acid chain: CUE domain-containing protein 5 (569 aa).

Residues Met-17–Asp-60 form the CUE domain. Disordered regions lie at residues Met-67–Ser-139, Asp-175–Ala-275, and Glu-311–Thr-569. Basic and acidic residues predominate over residues Ala-79–Ala-100. Over residues Asn-104 to Lys-113 the composition is skewed to basic residues. Basic and acidic residues predominate over residues Ser-234 to Leu-249. Residues Glu-250–Ser-274 show a composition bias toward low complexity. A compositionally biased stretch (basic and acidic residues) spans Val-329–Lys-340. Residues Glu-347–Leu-364 show a composition bias toward polar residues. Composition is skewed to basic and acidic residues over residues Glu-367 to Thr-381, Ile-399 to Asp-500, and Lys-507 to Glu-558.

It is found in the cytoplasm. The sequence is that of CUE domain-containing protein 5 from Schizosaccharomyces pombe (strain 972 / ATCC 24843) (Fission yeast).